We begin with the raw amino-acid sequence, 360 residues long: Neutral protease 2 homolog SS1G_13741 (360 aa).

A glycan (N-linked (GlcNAc...) asparagine) is linked at Asn-129. Intrachain disulfides connect Cys-189–Cys-261 and Cys-268–Cys-286. His-311 provides a ligand contact to Zn(2+). The active site involves Glu-312. Zn(2+)-binding residues include His-315 and Asp-326.

This sequence belongs to the peptidase M35 family. It depends on Zn(2+) as a cofactor.

The protein resides in the secreted. It catalyses the reaction Preferential cleavage of bonds with hydrophobic residues in P1'. Also 3-Asn-|-Gln-4 and 8-Gly-|-Ser-9 bonds in insulin B chain.. Functionally, secreted metalloproteinase that allows assimilation of proteinaceous substrates. Shows high activities on basic nuclear substrates such as histone and protamine. This is Neutral protease 2 homolog SS1G_13741 from Sclerotinia sclerotiorum (strain ATCC 18683 / 1980 / Ss-1) (White mold).